The sequence spans 306 residues: MQALLQEILDHVHPLLAQGQVAQYIPALAQVDPNQLGIAVQSLDGQLHCAGDAHTPFSIQSISKVFSLVQAINHSGEDIWSRLGYEPSGQAFNSLVQLEVEKGRPRNPFINAGALVICDINQSRYATPTLSMRDFVRRLSANPRIVSDAVVAESEYEHRARNAAMAYLMQAFGNFHNDVDAVLRSYFHHCALSMSCVDVARGFAFLANGGLCPHSGEQVLSRRQAQQVNAIMATSGLYDEAGNFAYRVGLPGKSGVGGGIVAVVPGRYSICVWSPALNASGNSLAGLRALELLSERMTGSVFSAIS.

Residues S61, N111, E155, N162, Y186, Y238, and V256 each contribute to the substrate site.

This sequence belongs to the glutaminase family. As to quaternary structure, homotetramer.

It catalyses the reaction L-glutamine + H2O = L-glutamate + NH4(+). This chain is Glutaminase, found in Pseudomonas entomophila (strain L48).